Here is a 359-residue protein sequence, read N- to C-terminus: Bergaptol O-methyltransferase (359 aa).

Residue His126 participates in bergaptol binding. S-adenosyl-L-homocysteine is bound by residues Ser179, Gly203, Asp226, Asp246, and Lys260. His264 is a bergaptol binding site. His264 serves as the catalytic Proton acceptor.

Belongs to the class I-like SAM-binding methyltransferase superfamily. Cation-independent O-methyltransferase family. COMT subfamily.

It catalyses the reaction a 5-hydroxyfurocoumarin + S-adenosyl-L-methionine = a 5-methoxyfurocoumarin + S-adenosyl-L-homocysteine + H(+). The enzyme catalyses bergaptol + S-adenosyl-L-methionine = bergapten + S-adenosyl-L-homocysteine. Its activity is regulated as follows. Inhibited by Cu(2+), Ni(2+) and Co(2+). In Glehnia littoralis (Beach silvertop), this protein is Bergaptol O-methyltransferase.